We begin with the raw amino-acid sequence, 367 residues long: CCCH-type zinc finger protein moe-3 (367 aa).

Residues 1–15 (MSKVKGDLEKSDKRP) show a composition bias toward basic and acidic residues. A disordered region spans residues 1–57 (MSKVKGDLEKSDKRPPSSMSTGSADSGVFSSGVHASSPSHSQGSSSQSGPPSPTTQL). A compositionally biased stretch (low complexity) spans 30 to 49 (SSGVHASSPSHSQGSSSQSG). Residues 63 to 92 (ETANLIAVNEQLRKEIAENKQIQTNQMRAL) are a coiled coil. The tract at residues 107 to 126 (SISPHHGFPQRPPRGERRMQ) is disordered. C3H1-type zinc fingers lie at residues 130 to 158 (SYKTVICQAWLESKTCTFAENCRFAHGEE) and 172 to 200 (KYKTKLCDKYTTTGLCPYGKRCLFIHPDN). The interval 235–268 (NTRNSYNQQPPPMGGLEMQSSPMKSSSDSSHMRS) is disordered. A compositionally biased stretch (low complexity) spans 252–268 (MQSSPMKSSSDSSHMRS).

Exclusively expressed in the hermaphrodite gonad. Weakly distributed throughout gonadal oocytes from the mitotic stage to the developing diakinesis stage, with expression restricted to the distal region of the gonad.

Zinc-finger protein that may play a role in oocyte maturation and fertility. The chain is CCCH-type zinc finger protein moe-3 from Caenorhabditis elegans.